Here is a 159-residue protein sequence, read N- to C-terminus: Dehydratase GME11372 (159 aa).

Residues histidine 79 and histidine 104 contribute to the active site.

It belongs to the scytalone dehydratase family. Homotrimer. Each subunit contains an active site, located in the central part of the hydrophobic core of the monomer, which functions independently.

It participates in secondary metabolite biosynthesis. Functionally, dehydratase; part of the gene cluster that mediates the biosynthesis of dibenzodioxocinones such as pestalotiollide B, a novel class of inhibitors against cholesterol ester transfer protein (CEPT). The biosynthesis initiates from condensation of acetate and malonate units catalyzed by the non-reducing PKS pks8/GME11356. Pks8/GME11356 lacks a thioesterase (TE) domain, which is important to the cyclizing of the third ring of atrochrysone carboxylic acid, and the esterase GME11355 might play the role of TE and catalyzes the cyclization reaction of the C ring. The lactamase-like protein GME11357 (or other beta-lactamases in Pestalotiopsis microspora) probably hydrolyzes the thioester bond between the ACP of pks8/GME11356 and the intermediate to release atrochrysone carboxylic acid, which is spontaneously dehydrates to form endocrocin anthrone. Endocrocin anthrone is further converted to emodin via the endocrocin intermediate. Emodin is then oxidized by several enzymes such as the Baeyer-Villiger oxidase GME11358, the oxidoreductase GME11367, the short chain dehydrogenase/reductase GME11373, as well as by other oxidoreductases from the cluster, to modify the A and C rings and open the B ring, and finally yield monodictyphenone. The prenyltransferase GME11375 may catalyze the addition reaction between the C5 side chains and the carbon bone of dibenzodioxocinones. The remaining biochemical reactions to the final product dibenzodioxocinones should be methylation catalyzed by methyltransferase GME11366 and reduction and lactonization reaction catalyzed by a series of oxidordeuctases. This is Dehydratase GME11372 from Pestalotiopsis microspora.